The sequence spans 235 residues: MKVQLIASTILEDPSWAGTDYVGDDETVTSADELAEFAGRNCYLSFDRPNPKTRENVDYLNHILDVGHESVLEHSSATFYIEASRSVLTELERHRHLSFSVVSQRYVDPTELGIHVPPAFTELSGSDADKAKEVLLDVQSFAQEAYEYLVHIFSDAGFPRKKAREAARAVLPNMTNSPMVVTGNHRAWRYVIKNRWHEAADAEIRELAGELLRQLREIAPNTYQDIPTEPYSYGG.

The region spanning Met-1–Glu-229 is the ThyX domain. FAD-binding positions include Ser-70 and Arg-93–Arg-95. Residues Glu-90 to Arg-93, Ser-103 to Arg-105, and Arg-168 each bind dUMP. The short motif at Arg-93–Ser-103 is the ThyX motif element. Residue Asn-184–Arg-186 coordinates FAD. DUMP is bound at residue Arg-195. Arg-195 serves as the catalytic Involved in ionization of N3 of dUMP, leading to its activation.

Belongs to the thymidylate synthase ThyX family. Homotetramer. The cofactor is FAD.

It catalyses the reaction dUMP + (6R)-5,10-methylene-5,6,7,8-tetrahydrofolate + NADPH + H(+) = dTMP + (6S)-5,6,7,8-tetrahydrofolate + NADP(+). Its pathway is pyrimidine metabolism; dTTP biosynthesis. Functionally, catalyzes the reductive methylation of 2'-deoxyuridine-5'-monophosphate (dUMP) to 2'-deoxythymidine-5'-monophosphate (dTMP) while utilizing 5,10-methylenetetrahydrofolate (mTHF) as the methyl donor, and NADPH and FADH(2) as the reductant. The chain is Probable flavin-dependent thymidylate synthase (48) from Mycobacterium (Mycobacteriophage D29).